The chain runs to 361 residues: Phospho-N-acetylmuramoyl-pentapeptide-transferase (361 aa).

10 helical membrane passes run 25 to 45 (RAVM…PWVI), 73 to 93 (TMGG…WADL), 97 to 117 (YVWL…YDDW), 132 to 152 (FKMA…IATA), 167 to 187 (TVAY…VIVG), 200 to 220 (GLAA…AYVA), 240 to 260 (VVVF…FNAY), 264 to 284 (VFMG…VAVI), 289 to 309 (IVLF…MIQV), and 338 to 358 (QVVV…LSTL).

It belongs to the glycosyltransferase 4 family. MraY subfamily. Requires Mg(2+) as cofactor.

It localises to the cell inner membrane. The catalysed reaction is UDP-N-acetyl-alpha-D-muramoyl-L-alanyl-gamma-D-glutamyl-meso-2,6-diaminopimeloyl-D-alanyl-D-alanine + di-trans,octa-cis-undecaprenyl phosphate = di-trans,octa-cis-undecaprenyl diphospho-N-acetyl-alpha-D-muramoyl-L-alanyl-D-glutamyl-meso-2,6-diaminopimeloyl-D-alanyl-D-alanine + UMP. The protein operates within cell wall biogenesis; peptidoglycan biosynthesis. Catalyzes the initial step of the lipid cycle reactions in the biosynthesis of the cell wall peptidoglycan: transfers peptidoglycan precursor phospho-MurNAc-pentapeptide from UDP-MurNAc-pentapeptide onto the lipid carrier undecaprenyl phosphate, yielding undecaprenyl-pyrophosphoryl-MurNAc-pentapeptide, known as lipid I. This is Phospho-N-acetylmuramoyl-pentapeptide-transferase from Chromobacterium violaceum (strain ATCC 12472 / DSM 30191 / JCM 1249 / CCUG 213 / NBRC 12614 / NCIMB 9131 / NCTC 9757 / MK).